Consider the following 508-residue polypeptide: Lysine--tRNA ligase (508 aa).

Mg(2+)-binding residues include E418 and E425.

This sequence belongs to the class-II aminoacyl-tRNA synthetase family. Homodimer. Mg(2+) serves as cofactor.

Its subcellular location is the cytoplasm. It catalyses the reaction tRNA(Lys) + L-lysine + ATP = L-lysyl-tRNA(Lys) + AMP + diphosphate. The chain is Lysine--tRNA ligase from Burkholderia cenocepacia (strain HI2424).